Reading from the N-terminus, the 175-residue chain is Large ribosomal subunit protein uL10 (175 aa).

This sequence belongs to the universal ribosomal protein uL10 family. Part of the ribosomal stalk of the 50S ribosomal subunit. The N-terminus interacts with L11 and the large rRNA to form the base of the stalk. The C-terminus forms an elongated spine to which L12 dimers bind in a sequential fashion forming a multimeric L10(L12)X complex.

Functionally, forms part of the ribosomal stalk, playing a central role in the interaction of the ribosome with GTP-bound translation factors. The sequence is that of Large ribosomal subunit protein uL10 from Picosynechococcus sp. (strain ATCC 27264 / PCC 7002 / PR-6) (Agmenellum quadruplicatum).